The primary structure comprises 362 residues: Sphingosine 1-phosphate receptor 1 (362 aa).

Over 1 to 25 the chain is Extracellular; sequence MDDLIARHYNFTGKFRKVHKDPGLK. The N-linked (GlcNAc...) asparagine glycan is linked to N10. Residues 26-47 traverse the membrane as a helical segment; sequence ADSVVFIIVCCFIILENVLVLL. The Cytoplasmic segment spans residues 48–61; it reads TIWRTKKFHKPMYY. Residues 62-83 traverse the membrane as a helical segment; sequence FIGNLALSDLLAGVVYTANILL. The Extracellular portion of the chain corresponds to 84-95; the sequence is SGANTYKLTPTQ. A helical membrane pass occupies residues 96 to 117; that stretch reads WFFREGSMFVALAASVFSLLAI. Residue 99-100 participates in sphing-4-enine 1-phosphate binding; sequence RE. At 118–139 the chain is on the cytoplasmic side; that stretch reads AIERHLTMLKMKLHNNGKTCRV. Residues 140-161 traverse the membrane as a helical segment; sequence FMLISTVWFIAAILGGLPVMGW. Residues 162 to 175 are Extracellular-facing; the sequence is NCIDSMNNCSTVLP. The cysteines at positions 163 and 170 are disulfide-linked. N169 carries N-linked (GlcNAc...) asparagine glycosylation. A helical transmembrane segment spans residues 176 to 203; the sequence is LYHKAYILFCTTVFSVILMAIVILYARI. Residues 204 to 238 lie on the Cytoplasmic side of the membrane; that stretch reads YALVRTRSRKLVFRKVANGRGSNKSSEKSMALLKT. Residues 239 to 259 form a helical membrane-spanning segment; sequence VIIVLSCFIACWAPLFILLLL. 246 to 250 contacts sphing-4-enine 1-phosphate; sequence FIACW. At 260–270 the chain is on the extracellular side; sequence DVACQTLTCSI. C263 and C268 are disulfide-bonded. The helical transmembrane segment at 271 to 291 threads the bilayer; that stretch reads LYKAEWFLALAVLNSAMNPLI. At 292 to 362 the chain is on the cytoplasmic side; it reads YTLTSNEMRR…VSSGNITSSS (71 aa). C309 is lipidated: S-palmitoyl cysteine. The interval 328-362 is disordered; it reads FSRSKSDNSSHPNKDEPEYSPRETIVSSGNITSSS. The segment covering 329 to 348 has biased composition (basic and acidic residues); that stretch reads SRSKSDNSSHPNKDEPEYSP. Residues 352 to 362 are compositionally biased toward polar residues; sequence IVSSGNITSSS.

Belongs to the G-protein coupled receptor 1 family.

The protein localises to the cell membrane. In terms of biological role, G-protein coupled receptor for the bioactive lysosphingolipid sphingosine 1-phosphate (S1P) that seems to be coupled to the G(i) subclass of heteromeric G proteins. Signaling leads to the activation of RAC1, SRC, PTK2/FAK1 and MAP kinases. Plays an important role in cell migration, probably via its role in the reorganization of the actin cytoskeleton and the formation of lamellipodia in response to stimuli that increase the activity of the sphingosine kinase SPHK1. Required for normal chemotaxis toward sphingosine 1-phosphate. The protein is Sphingosine 1-phosphate receptor 1 (s1pr1) of Danio rerio (Zebrafish).